A 129-amino-acid chain; its full sequence is Virion-associated protein (129 aa).

Coiled-coil stretches lie at residues 1 to 31 (MANLNQIQKEVSEILSDQKSMKSDIKAILEM) and 38 to 59 (IKESLEAVAAKIVNDLTKLIND). Residues 122–129 (PAGWPNQF) form a capsid binding region.

This sequence belongs to the caulimovirus ORF III family. In terms of assembly, homotetramer, through coiled-coil domain. Homotrimer when interacts with icosehadral capsid. Interacts with capsid protein, and with Movement protein.

The protein resides in the virion. It localises to the host cell junction. Its subcellular location is the host plasmodesma. In terms of biological role, plays a role in virus cell-to-cell and plant-to-plant transmission. Interacts with virion icosahedral capsid and movement protein, thereby facilitating virion cell-to-cell transmission through plasmodesmata opened by viral movement protein. Also interacts with aphid transmission factor, attaching the virion to aphid stylet when the animal feeds on an virus infected plant. Aphid saliva may later detach the virion, inducing release of infectious particles when the animal feeds on a new plant. The polypeptide is Virion-associated protein (Arabidopsis thaliana (Mouse-ear cress)).